We begin with the raw amino-acid sequence, 314 residues long: DNA-directed RNA polymerase subunit alpha (314 aa).

The interval 1–228 is alpha N-terminal domain (alpha-NTD); the sequence is MIEIEKPKIE…EHLNIFVGLT (228 aa). The segment at 246–314 is alpha C-terminal domain (alpha-CTD); sequence EKVLEMTIEE…ELGLGLRKDD (69 aa).

Belongs to the RNA polymerase alpha chain family. As to quaternary structure, homodimer. The RNAP catalytic core consists of 2 alpha, 1 beta, 1 beta' and 1 omega subunit. When a sigma factor is associated with the core the holoenzyme is formed, which can initiate transcription.

The catalysed reaction is RNA(n) + a ribonucleoside 5'-triphosphate = RNA(n+1) + diphosphate. Functionally, DNA-dependent RNA polymerase catalyzes the transcription of DNA into RNA using the four ribonucleoside triphosphates as substrates. The protein is DNA-directed RNA polymerase subunit alpha of Bacillus velezensis (strain DSM 23117 / BGSC 10A6 / LMG 26770 / FZB42) (Bacillus amyloliquefaciens subsp. plantarum).